The primary structure comprises 573 residues: MTAEGLLQILLYLGLLAAVTPLLGRYMARVFEGERTLPGIVLGPLERGLYRIAGIDPAREQHWTGYTLALLSFNLLGLLLLYALLRFQALLPLNPAELGPVGPDLAFNTAVSFTTNTNWQSYGGETTLSYLSQMLGLTVQNFVSAATGIAVAVALIRGFARRAGKTVGNFWADLVRATLYVLLPLAFLGALVLVWQGVPQNFDAYVTATTLEGGNQVLAQGPAASQIAIKQLGSNGGGFFNVNSAHPYENPTALTNLLESFYLLMIAAALIYSFGRMVGDTRQGRALWTAVFILFVAGLAVTWWAEAQGNPAVTALGVETTDGNMEGKEVRYGTALSALWAVATTAASNGSVNAMHDSFMPLGGMVPMLNMMLGEVIYGGVGAGLYGLLVFVILAVFIAGLMVGRTPEYLGKKIEAREIKLAVIAVLVFPLGILGGAALTTVVPQMLASVQDPGPHGLSEILYAYTSATGNNGSAFAGFGANTPWHNTGLGLAMLLGRFAVIVPTLAIAGSLVAKRAAPAGPGTLPTHGTLFITLLIATILIVGGLTFFPALALGPIAEHLSLTAGTLFGAVP.

A run of 10 helical transmembrane segments spans residues 3–23, 65–85, 136–156, 179–199, 254–274, 286–306, 383–403, 423–443, 489–509, and 531–551; these read AEGL…TPLL, GYTL…YALL, GLTV…VALI, LYVL…QGVP, LTNL…IYSF, ALWT…WWAE, AGLY…GLMV, VIAV…TTVV, GLGL…LAIA, and LFIT…FFPA.

The protein belongs to the KdpA family. The system is composed of three essential subunits: KdpA, KdpB and KdpC.

Its subcellular location is the cell inner membrane. Its function is as follows. Part of the high-affinity ATP-driven potassium transport (or Kdp) system, which catalyzes the hydrolysis of ATP coupled with the electrogenic transport of potassium into the cytoplasm. This subunit binds the periplasmic potassium ions and delivers the ions to the membrane domain of KdpB through an intramembrane tunnel. The sequence is that of Potassium-transporting ATPase potassium-binding subunit from Rhodospirillum centenum (strain ATCC 51521 / SW).